The following is a 199-amino-acid chain: Recombination protein RecR (199 aa).

A C4-type zinc finger spans residues 57 to 72 (CQSCRTYTEETLCPIC). Residues 81 to 176 (STICVVETPA…MISRIAHGVP (96 aa)) enclose the Toprim domain.

Belongs to the RecR family.

May play a role in DNA repair. It seems to be involved in an RecBC-independent recombinational process of DNA repair. It may act with RecF and RecO. The polypeptide is Recombination protein RecR (Shewanella putrefaciens (strain CN-32 / ATCC BAA-453)).